A 102-amino-acid polypeptide reads, in one-letter code: MICOS complex subunit MIC12 (102 aa).

A helical membrane pass occupies residues Val-4–Phe-26.

The protein belongs to the MICOS complex subunit Mic12 family. Component of the mitochondrial contact site and cristae organizing system (MICOS) complex.

Its subcellular location is the mitochondrion inner membrane. Component of the MICOS complex, a large protein complex of the mitochondrial inner membrane that plays crucial roles in the maintenance of crista junctions, inner membrane architecture, and formation of contact sites to the outer membrane. This chain is MICOS complex subunit MIC12 (AIM5), found in Lachancea thermotolerans (strain ATCC 56472 / CBS 6340 / NRRL Y-8284) (Yeast).